Here is a 164-residue protein sequence, read N- to C-terminus: Crossover junction endodeoxyribonuclease RuvC (164 aa).

Active-site residues include Asp7, Glu67, and Asp140. The Mg(2+) site is built by Asp7, Glu67, and Asp140.

This sequence belongs to the RuvC family. As to quaternary structure, homodimer which binds Holliday junction (HJ) DNA. The HJ becomes 2-fold symmetrical on binding to RuvC with unstacked arms; it has a different conformation from HJ DNA in complex with RuvA. In the full resolvosome a probable DNA-RuvA(4)-RuvB(12)-RuvC(2) complex forms which resolves the HJ. Requires Mg(2+) as cofactor.

It is found in the cytoplasm. It carries out the reaction Endonucleolytic cleavage at a junction such as a reciprocal single-stranded crossover between two homologous DNA duplexes (Holliday junction).. Its function is as follows. The RuvA-RuvB-RuvC complex processes Holliday junction (HJ) DNA during genetic recombination and DNA repair. Endonuclease that resolves HJ intermediates. Cleaves cruciform DNA by making single-stranded nicks across the HJ at symmetrical positions within the homologous arms, yielding a 5'-phosphate and a 3'-hydroxyl group; requires a central core of homology in the junction. The consensus cleavage sequence is 5'-(A/T)TT(C/G)-3'. Cleavage occurs on the 3'-side of the TT dinucleotide at the point of strand exchange. HJ branch migration catalyzed by RuvA-RuvB allows RuvC to scan DNA until it finds its consensus sequence, where it cleaves and resolves the cruciform DNA. The chain is Crossover junction endodeoxyribonuclease RuvC from Alkaliphilus metalliredigens (strain QYMF).